The following is a 1135-amino-acid chain: MPVFHTRTIESILEPVAQQISHLVIMHEEGEVDGKAIPDLTAPVSAVQAAVSNLVRVGKETVQTTEDQILKRDMPPAFIKVENACTKLVRAAQMLQADPYSVPARDYLIDGSRGILSGTSDLLLTFDEAEVRKIIRVCKGILEYLTVAEVVETMEDLVTYTKNLGPGMTKMAKMIDERQQELTHQEHRVMLVNSMNTVKELLPVLISAMKIFVTTKNTKSQGIEEALKNRNFTVEKMSAEINEIIRVLQLTSWDEDAWASKDTEAMKRALALIDSKMNQAKGWLRDPNAPPGDAGEQAIRQILDEAGKAGELCAGKERREILGTCKTLGQMTDQLADLRARGQGATPMAMQKAQQVSQGLDLLTAKVENAARKLEAMTNSKQAIAKKIDAAQNWLADPNGGSEGEEHIRGIMSEARKVAELCEEPKERDDILRSLGEISALTAKLSDLRRHGKGDSPEARALAKQIATSLQNLQSKTNRAVANTRPVKAAVHLEGKIEQAQRWIDNPTVDDRGVGQAAIRGLVAEGRRLANVMMGPYRQDLLAKCDRVDQLAAQLADLAARGEGESPQARAIAAQLQDSLKDLKARMQEAMTQEVSDVFSDTTTPIKLLAVAATAPSDTPNREEVFEERAANFENHAARLGATAEKAAAVGTANKTTVEGIQATVKSARELTPQVVSAARILLRNPGNQAAYEHFETMKNQWIDNVEKMTGLVDEAIDTKSLLDASEEAIKKDLDKCKVAMANMQPQMLVAGATSIARRANRILLVAKREVENSEDPKFREAVKAASDELSKTISPMVMDAKAVAGNISDPGLQKSFLDSGYRILGAVAKVREAFQPQEPDFPPPPPDLEHLHLTDELAPPKPPLPEGEVPPPRPPPPEEKDEEFPEQKAGEAINQPMMMAARQLHDEARKWSSKPVTVINEAAEAGVDIDEEDDADVEFSLPSDIEDDYEPELLLMPTNQPVNQPILAAAQSLHREATKWSSKGNDIIAAAKRMALLMAEMSRLVRGGSGNKRALIQCAKDIAKASDEVTRLAKEVAKQCTDKRIRTNLLQVCERIPTISTQLKILSTVKATMLGRTNISDEESEQATEMLVHNAQNLMQSVKETVREAEAASIKIRTDAGFTLRWVRKTPWYQ.

The N-terminal globular head stretch occupies residues 2–835; it reads PVFHTRTIES…GAVAKVREAF (834 aa). At Tyr100 the chain carries Phosphotyrosine. Positions 168–208 are talin-interaction; that stretch reads MTKMAKMIDERQQELTHQEHRVMLVNSMNTVKELLPVLISA. Repeat copies occupy residues 259-369, 370-479, and 480-589. The tract at residues 259 to 589 is 3 X 112 AA tandem repeats; that stretch reads ASKDTEAMKR…LKDLKARMQE (331 aa). Residues Tyr537 and Tyr822 each carry the phosphotyrosine modification. The segment at 836–878 is linker (Pro-rich); it reads QPQEPDFPPPPPDLEHLHLTDELAPPKPPLPEGEVPPPRPPPP. Residues 837-888 are disordered; that stretch reads PQEPDFPPPPPDLEHLHLTDELAPPKPPLPEGEVPPPRPPPPEEKDEEFPEQ. The span at 860-876 shows a compositional bias: pro residues; the sequence is PPKPPLPEGEVPPPRPP. Residues 879 to 1135 form a C-terminal tail region; sequence EEKDEEFPEQ…RWVRKTPWYQ (257 aa). Facilitates phospholipid membrane insertion stretches follow at residues 1004–1047 and 1121–1135; these read RLVR…KRIR and AGFTLRWVRKTPWYQ. Tyr1134 is subject to Phosphotyrosine; by SRC-type Tyr-kinases.

The protein belongs to the vinculin/alpha-catenin family. In terms of assembly, exhibits self-association properties. Interacts with APBB1IP, NRAP and TLN1. Interacts with CTNNB1 and this interaction is necessary for its localization to the cell-cell junctions and for its function in regulating cell surface expression of E-cadherin. In terms of processing, phosphorylated; on serines, threonines and tyrosines. Phosphorylation on Tyr-1134 in activated platelets affects head-tail interactions and cell spreading but has no effect on actin binding nor on localization to focal adhesion plaques. Post-translationally, acetylated; mainly by myristic acid but also by a small amount of palmitic acid. As to expression, isoform Metavinculin is muscle-specific.

The protein resides in the cell membrane. The protein localises to the cell junction. It is found in the adherens junction. Its subcellular location is the focal adhesion. It localises to the cytoplasm. The protein resides in the cytoskeleton. The protein localises to the sarcolemma. It is found in the cell projection. Its subcellular location is the podosome. Actin filament (F-actin)-binding protein involved in cell-matrix adhesion and cell-cell adhesion. Regulates cell-surface E-cadherin expression and potentiates mechanosensing by the E-cadherin complex. May also play important roles in cell morphology and locomotion. The polypeptide is Vinculin (VCL) (Gallus gallus (Chicken)).